A 587-amino-acid polypeptide reads, in one-letter code: Synaptotagmin-3 (587 aa).

The Vesicular segment spans residues 1-54; sequence MSGDYEDDLCRRALILVSDLCARVRDADTNDRCQEFNELRIRGYPRGPDADISV. Residues 10 to 34 form a cysteine motif region; it reads CRRALILVSDLCARVRDADTNDRCQ. A helical transmembrane segment spans residues 55–75; that stretch reads SLLSVIVTFCGIVLLGVSLFV. Over 76–587 the chain is Cytoplasmic; the sequence is SWKLCWVPWR…KGLSEKENSE (512 aa). Residues 183–205 show a composition bias toward low complexity; sequence PSQTSPELPSEGGTGSGLLLLPP. A disordered region spans residues 183–258; it reads PSQTSPELPS…EERPPALPLP (76 aa). Residues 213–224 show a composition bias toward polar residues; it reads AQSHQQVTSLAP. Positions 229 to 244 are enriched in low complexity; it reads PALPRPLTQQTLTTQA. Arginine 286 bears the Omega-N-methylarginine mark. 2 consecutive C2 domains span residues 296-417 and 428-562; these read PCGR…PLWR and DLGE…EHWH. Residues aspartate 327, aspartate 333, aspartate 385, phenylalanine 386, aspartate 387, serine 390, aspartate 393, aspartate 459, aspartate 465, aspartate 519, and aspartate 521 each coordinate Ca(2+).

Belongs to the synaptotagmin family. In terms of assembly, homodimer; disulfide-linked via the cysteine motif. Can also form heterodimers with SYT6, SYT9 and SYT10. Requires Ca(2+) as cofactor.

It is found in the cell membrane. The protein resides in the cytoplasmic vesicle. It localises to the secretory vesicle membrane. Ca(2+) sensor involved in Ca(2+)-dependent exocytosis of secretory vesicles through Ca(2+) and phospholipid binding to the C2 domain. Ca(2+) induces binding of the C2-domains to phospholipid membranes and to assembled SNARE-complexes; both actions contribute to triggering exocytosis. Plays a role in dendrite formation by melanocytes. The polypeptide is Synaptotagmin-3 (Syt3) (Mus musculus (Mouse)).